Here is a 203-residue protein sequence, read N- to C-terminus: Lectin (203 aa).

A signal peptide spans 1–20; that stretch reads MINILHVIAGLALASVGVDA. A propeptide spanning residues 21–53 is cleaved from the precursor; sequence RQVGVGADVLHAVENTIDSITGVEASHSALEVG.

As to quaternary structure, monomer.

Functionally, N-acetyl-D-glucosamine-specific lectin. Specifically agglutinates rabbit erythrocytes. In Ulva pertusa (Sea lettuce), this protein is Lectin (UPL1).